Consider the following 212-residue polypeptide: Peptide methionine sulfoxide reductase MsrA (212 aa).

Residue Cys-52 is part of the active site.

Belongs to the MsrA Met sulfoxide reductase family.

It catalyses the reaction L-methionyl-[protein] + [thioredoxin]-disulfide + H2O = L-methionyl-(S)-S-oxide-[protein] + [thioredoxin]-dithiol. The enzyme catalyses [thioredoxin]-disulfide + L-methionine + H2O = L-methionine (S)-S-oxide + [thioredoxin]-dithiol. In terms of biological role, has an important function as a repair enzyme for proteins that have been inactivated by oxidation. Catalyzes the reversible oxidation-reduction of methionine sulfoxide in proteins to methionine. The polypeptide is Peptide methionine sulfoxide reductase MsrA (Yersinia enterocolitica serotype O:8 / biotype 1B (strain NCTC 13174 / 8081)).